A 184-amino-acid chain; its full sequence is Ribosome-recycling factor (184 aa).

The disordered stretch occupies residues 134–167 (MNDQLKKDEKNGDITEDELRSGTEDVQKATDNSI).

This sequence belongs to the RRF family.

Its subcellular location is the cytoplasm. Its function is as follows. Responsible for the release of ribosomes from messenger RNA at the termination of protein biosynthesis. May increase the efficiency of translation by recycling ribosomes from one round of translation to another. The sequence is that of Ribosome-recycling factor from Staphylococcus aureus (strain Mu3 / ATCC 700698).